The primary structure comprises 502 residues: AAAMDFSHWINLKVILEELQLRGHEITVLVPSPSLLLDHTKIPFNVEVLQLQVTKETLMEELNTVLYMSSFELPTLSWWKVLGKMVEMGKQFSKNLRRVCDSAITNKELLDRLKAAKFDICLADPLAFCGELVAELLNIPFVYSFRFSIGNIIERSCAGLPTPSSYVPGSTSGLTDNMSFVQRLKNWLLYLMNDMMFSHFMLSEWDEYYSKVLGRRTTICEIMGKAEMWLIRSYWDFEFPRPFLPNFEYVGGLHCKPAKPLPEELEEFVQSSGNDGVVVFTLGSMIQNLTEERSNLIASALAQIPQKVLWRYTGKKPATLGPNTRLFEWIPQNDLLGHPKTRAFITHGGTNGLYEAIYHGVPMVGIPLFGDQPDNIARVKAKGAAVDVDLRIMTTSSLLKALKDVINNPSYKENAMKLSRIHHDQPLKPLDRAVFWIEFVMRHKGARHLRVAAHDLTWFQYYSLDVVVFLLTCVATIIFLAKKCCLFFYRRFCKTGNKRKRE.

N-linked (GlcNAc...) asparagine glycosylation is found at Asn-177 and Asn-288. The chain crosses the membrane as a helical span at residues 466–481; it reads VVVFLLTCVATIIFLA.

This sequence belongs to the UDP-glycosyltransferase family.

It localises to the microsome membrane. The protein localises to the endoplasmic reticulum membrane. The catalysed reaction is glucuronate acceptor + UDP-alpha-D-glucuronate = acceptor beta-D-glucuronoside + UDP + H(+). UDPGT is of major importance in the conjugation and subsequent elimination of potentially toxic xenobiotics and endogenous compounds. The protein is UDP-glucuronosyltransferase 2C1 (UGT2C1) of Oryctolagus cuniculus (Rabbit).